The chain runs to 225 residues: tRNA (guanine-N(1)-)-methyltransferase (225 aa).

Residues glycine 112 and 132-137 (IGDYVL) contribute to the S-adenosyl-L-methionine site.

This sequence belongs to the RNA methyltransferase TrmD family. In terms of assembly, homodimer.

It is found in the cytoplasm. It catalyses the reaction guanosine(37) in tRNA + S-adenosyl-L-methionine = N(1)-methylguanosine(37) in tRNA + S-adenosyl-L-homocysteine + H(+). Specifically methylates guanosine-37 in various tRNAs. This Bacteroides thetaiotaomicron (strain ATCC 29148 / DSM 2079 / JCM 5827 / CCUG 10774 / NCTC 10582 / VPI-5482 / E50) protein is tRNA (guanine-N(1)-)-methyltransferase.